The sequence spans 196 residues: V-type proton ATPase proteolipid subunit (196 aa).

Over 1 to 25 (MFQLLSFLLSGEATAVERIITDACP) the chain is Lumenal. Residues 26 to 46 (VYAPFFGAMGVTAALVFTVMG) form a helical membrane-spanning segment. Residues 47 to 72 (AAYGTAKASVGISNMGVMKPDLVIKA) lie on the Cytoplasmic side of the membrane. The helical transmembrane segment at 73-93 (FIPVIFAGVIAIYGLIICVIL) threads the bilayer. Topologically, residues 94–111 (VGGIKPNANYTLMKSFTD) are lumenal. Residues 112–132 (LGAGLTVGLCGLAAGMAIGIV) traverse the membrane as a helical segment. The Cytoplasmic segment spans residues 133-150 (GDSGVRAFGQQPKLYVIM). The helical transmembrane segment at 151–171 (MLILIFSEALGLYGLIIGILL) threads the bilayer. Topologically, residues 172-196 (SSVSDTYCPGQALVPLNSGNVIGKN) are lumenal.

This sequence belongs to the V-ATPase proteolipid subunit family. In terms of assembly, V-ATPase is a heteromultimeric enzyme composed of a peripheral catalytic V1 complex (main components: subunits A, B, C, D, E, and F) attached to an integral membrane V0 proton pore complex (main component: the proteolipid protein; which is present as a hexamer that forms the proton-conducting pore).

It localises to the vacuole membrane. In terms of biological role, proton-conducting pore forming subunit of the membrane integral V0 complex of vacuolar ATPase. V-ATPase is responsible for acidifying a variety of intracellular compartments in eukaryotic cells. The polypeptide is V-type proton ATPase proteolipid subunit (vatP) (Dictyostelium discoideum (Social amoeba)).